Here is a 375-residue protein sequence, read N- to C-terminus: Pectate lyase B (375 aa).

The N-terminal stretch at 1 to 22 (MKSLITPIAAGLLLAFSQYSLA) is a signal peptide. Cys93 and Cys176 are disulfide-bonded. Asp150, Asp152, Glu187, and Asp191 together coordinate Ca(2+). Residue Arg240 is part of the active site. A disulfide bridge links Cys351 with Cys374.

It belongs to the polysaccharide lyase 1 family. PLADES subfamily. Ca(2+) is required as a cofactor.

Its subcellular location is the secreted. The catalysed reaction is Eliminative cleavage of (1-&gt;4)-alpha-D-galacturonan to give oligosaccharides with 4-deoxy-alpha-D-galact-4-enuronosyl groups at their non-reducing ends.. The protein operates within glycan metabolism; pectin degradation; 2-dehydro-3-deoxy-D-gluconate from pectin: step 2/5. In terms of biological role, involved in maceration and soft-rotting of plant tissue. This Dickeya chrysanthemi (Pectobacterium chrysanthemi) protein is Pectate lyase B (pelB).